The following is a 496-amino-acid chain: Sodium/sialic acid symporter SiaT (496 aa).

Topologically, residues 1–7 (MQLHDFG) are periplasmic. A helical membrane pass occupies residues 8 to 29 (FINYAVLFGYLAAMLLVGVYFS). The Cytoplasmic portion of the chain corresponds to 30-46 (KRQKTADDYFRGGGRVP). The chain crosses the membrane as a helical span at residues 47–59 (GWAAGVSVFATTL). Alanine 56 lines the Na(+) pocket. Threonine 58 contributes to the N-acetyl-alpha-neuraminate binding site. Leucine 59 is a Na(+) binding site. The N-acetyl-alpha-neuraminate site is built by serine 60, threonine 63, and glutamine 82. Residues 60–76 (SSITFMSIPAKAYTSDW) are Periplasmic-facing. The helical transmembrane segment at 77–92 (TFIIGQYLAIAILPLV) threads the bilayer. The Cytoplasmic portion of the chain corresponds to 93-116 (FYFYIPFFRKLKITSAYEYLEARF). The helical transmembrane segment at 117–144 (DVRSRLFASLSFMLFHIGRVAIITYLTV) threads the bilayer. Residue arginine 135 participates in N-acetyl-alpha-neuraminate binding. The Periplasmic segment spans residues 145–154 (LALRPFMGID). A helical membrane pass occupies residues 155–172 (PVVLIVLISLLCIIYTWM). Over 173–174 (GG) the chain is Cytoplasmic. The chain crosses the membrane as a helical span at residues 175–199 (IEGVIWTDVIQGLLLSGGAVLIFIM). A Na(+)-binding site is contributed by aspartate 182. Topologically, residues 200-235 (ICFKVDGGISEIFTTTAQADKFFPTTQWRWSWTDST) are periplasmic. The helical transmembrane segment at 236–252 (IPVLMIGFLFANIQQFT) threads the bilayer. Residues 253 to 272 (ASQDVVQRYIVTDSIKETKR) lie on the Cytoplasmic side of the membrane. The helical transmembrane segment at 273–292 (TLITNAKLVAIIPIFFFAIG) threads the bilayer. Residues 293–325 (SALFVYYQQNPSLLPAGFNTGGILPLFIVTEMP) lie on the Periplasmic side of the membrane. A helical transmembrane segment spans residues 326-356 (IGIAGLIIAAIFAAAQSSISSSLNSISSCFN). Na(+)-binding residues include alanine 339, serine 342, serine 343, serine 345, and serine 346. Over 357 to 374 (SDIYTRLSKSSPSPEQKM) the chain is Cytoplasmic. A helical membrane pass occupies residues 375-396 (KVAKLVIIVAGIFSSLAAIWLV). The Periplasmic portion of the chain corresponds to 397–403 (LSDEAEI). Residues 404–427 (WDAFNSLIGLMGGPMTGLFMLGIF) traverse the membrane as a helical segment. The Cytoplasmic segment spans residues 428–432 (VKRAN). Residues 433–453 (AGSAVVGIIVSIIAVLAARYG) traverse the membrane as a helical segment. Residues 454-457 (SDLN) lie on the Periplasmic side of the membrane. The helical transmembrane segment at 458–479 (FFFYGVIGSMSVVIAGTITAPL) threads the bilayer. Residues 480 to 496 (FAPAKQLSLDDSETSEN) lie on the Cytoplasmic side of the membrane.

The protein belongs to the sodium:solute symporter (SSF) (TC 2.A.21) family.

It is found in the cell inner membrane. The enzyme catalyses N-acetyl-alpha-neuraminate(out) + 2 Na(+)(out) = N-acetyl-alpha-neuraminate(in) + 2 Na(+)(in). Both Na(+) sites regulate Neu5Ac transport. The binding energy of the second Na(+) ion may be used to allosterically stabilize the substrate without directly coordinating it. In the absence of external Na(+), the rate is reduced by 78%. Functionally, symporter that uses the Na(+) gradient as the driving force for the uptake of the sialic acid N-acetylneuraminic acid (Neu5Ac). It allows the use of host-derived Neu5Ac as an energy source by P.mirabilis. Also binds N-glycolylneuraminic acid (Neu5Gc) and ketodeoxynonulosonic acid (KDN). Shows the highest affinity for Neu5Ac and Neu5Gc, which commonly occupy the terminal non-reducing position of mammalian cell surface glycoconjugates. The chain is Sodium/sialic acid symporter SiaT from Proteus mirabilis (strain HI4320).